Consider the following 492-residue polypeptide: N-succinylglutamate 5-semialdehyde dehydrogenase (492 aa).

220–225 (GSANTG) provides a ligand contact to NAD(+). Catalysis depends on residues glutamate 243 and cysteine 277.

This sequence belongs to the aldehyde dehydrogenase family. AstD subfamily.

The enzyme catalyses N-succinyl-L-glutamate 5-semialdehyde + NAD(+) + H2O = N-succinyl-L-glutamate + NADH + 2 H(+). The protein operates within amino-acid degradation; L-arginine degradation via AST pathway; L-glutamate and succinate from L-arginine: step 4/5. In terms of biological role, catalyzes the NAD-dependent reduction of succinylglutamate semialdehyde into succinylglutamate. The polypeptide is N-succinylglutamate 5-semialdehyde dehydrogenase (Escherichia coli (strain ATCC 8739 / DSM 1576 / NBRC 3972 / NCIMB 8545 / WDCM 00012 / Crooks)).